The following is a 728-amino-acid chain: Ophiobolin F synthase oblA (728 aa).

The tract at residues 1 to 322 (MEYKYSTIVD…RYHFPGRWNE (322 aa)) is (7Z)-ophiobola-7,19-dien-3-ol synthase. D93 and D97 together coordinate Mg(2+). Substrate is bound at residue D93. A DDXXD 1 motif is present at residues 93–97 (DDEID). Substrate is bound by residues 182–185 (RCMD), N226, 230–234 (SYEKE), and 313–314 (RY). The NSE/DTE signature appears at 226 to 234 (NDLFSYEKE). The interval 323–728 (LQKLRAEHGI…LRLMVDMLKV (406 aa)) is geranylfarnesyl diphosphate synthase. Positions 362 to 371 (GINGTNGVNG) are enriched in low complexity. Positions 362–394 (GINGTNGVNGKRNRDEDGDENDARINGNGFKKP) are disordered. K439, R442, and H471 together coordinate isopentenyl diphosphate. D478 and D482 together coordinate Mg(2+). The DDXXD 2 signature appears at 478 to 482 (DDIED). Position 487 (R487) interacts with dimethylallyl diphosphate. R488 lines the isopentenyl diphosphate pocket. Positions 565, 566, 604, 611, 621, and 631 each coordinate dimethylallyl diphosphate.

The protein in the N-terminal section; belongs to the terpene synthase family. This sequence in the C-terminal section; belongs to the FPP/GGPP synthase family. It depends on Mg(2+) as a cofactor.

The enzyme catalyses isopentenyl diphosphate + (2E,6E)-farnesyl diphosphate = (2E,6E,10E)-geranylgeranyl diphosphate + diphosphate. It catalyses the reaction isopentenyl diphosphate + (2E,6E,10E)-geranylgeranyl diphosphate = (2E,6E,10E,14E)-geranylfarnesyl diphosphate + diphosphate. The catalysed reaction is (2E,6E,10E,14E)-geranylfarnesyl diphosphate + H2O = ophiobolin F + diphosphate. It functions in the pathway secondary metabolite biosynthesis; terpenoid biosynthesis. In terms of biological role, bifunctional sesterterpene synthase; part of the gene cluster that mediates the biosynthesis of the sesterterpenes ophiobolins, fungal phytotoxins with potential anti-cancer activities. The first step of the pathway is performed by the sesterterpene synthase oblA that possesses both prenyl transferase and terpene cyclase activity, converting isopentenyl diphosphate and dimethylallyl diphosphate into geranylfarnesyl diphosphate (GFPP) and further converting GFPP into ophiobolin F, respectively. Other sesterterpenoids (C(25) terpenoids) are found as minor products of oblA. The cytochrome P450 monooxygenase oblB then catalyzes a four-step oxidative transformation of ophiobolin F to yield ophiobolin C. The function of the cytochrome P450 monooxygenase oblE has still to be determined. The sequence is that of Ophiobolin F synthase oblA from Emericella variicolor (Aspergillus stellatus).